We begin with the raw amino-acid sequence, 588 residues long: Protein kinase C iota type (588 aa).

Residues 18-101 (QVRVKAYYRG…SELIIHVFPC (84 aa)) form the PB1 domain. The Phorbol-ester/DAG-type zinc finger occupies 133–183 (GHAFQAKRFNRRAHCAICTDRIWGLGRQGYKCINCKLLVHKKCHKLVTVEC). The segment at 194 to 213 (GRIDPGSTHPEHPDQVLGKK) is disordered. Residues 246-514 (FDLLRVIGRG…FADIMAHPFF (269 aa)) enclose the Protein kinase domain. ATP contacts are provided by residues 252 to 260 (IGRGSYAKV) and K275. The Proton acceptor role is filled by D370. T404 and T556 each carry phosphothreonine. An AGC-kinase C-terminal domain is found at 515-586 (RNVDWDLMEQ…INPLLMSAEE (72 aa)).

It belongs to the protein kinase superfamily. AGC Ser/Thr protein kinase family. PKC subfamily.

The enzyme catalyses L-seryl-[protein] + ATP = O-phospho-L-seryl-[protein] + ADP + H(+). The catalysed reaction is L-threonyl-[protein] + ATP = O-phospho-L-threonyl-[protein] + ADP + H(+). With respect to regulation, exhibits an elevated basal enzymatic activity and is not regulated by diacylglycerol, phosphatidylserine, phorbol esters or calcium ions. Two specific sites, Thr-404 (activation loop of the kinase domain) and Thr-556 (turn motif), need to be phosphorylated for its full activation. Calcium- and diacylglycerol-independent serine/ threonine-protein kinase that plays a general protective role against apoptotic stimuli, is involved in NF-kappa-B activation, cell survival, differentiation and polarity, and contributes to the regulation of microtubule dynamics in the early secretory pathway. Is required for the formation and maintenance of the zonula adherens during early epithelial development and plays a critical role in organ morphogenesis and in regulating the orientation of cell division. Required for polarized epithelial organization, myocardium coherence and cell connectivity in the early somite stages. Required for heart cone tilt and development of circulatory architecture during embryogenesis. This Danio rerio (Zebrafish) protein is Protein kinase C iota type (prkci).